A 782-amino-acid polypeptide reads, in one-letter code: Probable methionine--tRNA ligase, cytoplasmic (782 aa).

Residues proline 231–asparagine 241 carry the 'HIGH' region motif. The short motif at lysine 551–serine 555 is the 'KMSKS' region element.

This sequence belongs to the class-I aminoacyl-tRNA synthetase family.

It localises to the cytoplasm. It catalyses the reaction tRNA(Met) + L-methionine + ATP = L-methionyl-tRNA(Met) + AMP + diphosphate. This chain is Probable methionine--tRNA ligase, cytoplasmic (rar1), found in Schizosaccharomyces pombe (strain 972 / ATCC 24843) (Fission yeast).